Here is a 142-residue protein sequence, read N- to C-terminus: Ig heavy chain V region IR2 (142 aa).

Positions 1 to 19 (MDLRLTYVFIVAILKGVLC) are cleaved as a signal peptide. An Ig-like domain is found at 20-133 (EVKLEESGGG…YSENWFVYWG (114 aa)).

The protein is Ig heavy chain V region IR2 of Rattus norvegicus (Rat).